The chain runs to 110 residues: uncharacterized protein (110 aa).

This sequence belongs to the HesB/IscA family.

This is an uncharacterized protein from Rickettsia prowazekii (strain Madrid E).